We begin with the raw amino-acid sequence, 96 residues long: Myticin-A (96 aa).

The first 20 residues, 1–20 (MKATILLAVLVAVFVAGTEA), serve as a signal peptide directing secretion. A propeptide spans 61–96 (VNNPFRVNQVAKSINDLDYTPIMKSMENLDNGMDML) (removed in mature form).

In terms of processing, contains four disulfide bonds. As to expression, hemocytes.

The protein resides in the secreted. Its function is as follows. Bacteriolytic activity against Gram-positive bacteria M.luteus, B.megaterium and A.viridans. The protein is Myticin-A of Mytilus galloprovincialis (Mediterranean mussel).